Here is a 197-residue protein sequence, read N- to C-terminus: Putative peptidyl-prolyl cis-trans isomerase (197 aa).

The region spanning 14–195 (NEIKLIMHTN…HDITIDSIEI (182 aa)) is the PPIase cyclophilin-type domain.

This sequence belongs to the cyclophilin-type PPIase family.

It catalyses the reaction [protein]-peptidylproline (omega=180) = [protein]-peptidylproline (omega=0). Functionally, PPIases accelerate the folding of proteins. It catalyzes the cis-trans isomerization of proline imidic peptide bonds in oligopeptides. The protein is Putative peptidyl-prolyl cis-trans isomerase of Staphylococcus saprophyticus subsp. saprophyticus (strain ATCC 15305 / DSM 20229 / NCIMB 8711 / NCTC 7292 / S-41).